The sequence spans 596 residues: Actin-related protein 9 (596 aa).

Residues 148–178 form a disordered region; that stretch reads LASPAETSPDKGDASASEAVPDVTDSKDTSE.

Belongs to the actin family. ARP8 subfamily.

The chain is Actin-related protein 9 (ARP9) from Arabidopsis thaliana (Mouse-ear cress).